The primary structure comprises 161 residues: Protein shisa-like-2B (161 aa).

Residues Ile65–Val85 traverse the membrane as a helical segment. A disordered region spans residues Gln115–Ser134.

The protein belongs to the shisa family.

The protein localises to the membrane. In Bos taurus (Bovine), this protein is Protein shisa-like-2B (SHISAL2B).